The sequence spans 208 residues: Cysteine-rich protein 2 (208 aa).

The LIM zinc-binding 1 domain occupies 5-57 (CPKCDKTVYFAEKVSSLGKDWHKFCLKCERCSKTLTPGGHAEHDGKPFCHKPC). N6-acetyllysine is present on Lys-23. A disordered region spans residues 98 to 119 (AEERKASGPPKGPSRASSVTTF). Position 104 is a phosphoserine (Ser-104). Residues 126 to 178 (CPRCSKKVYFAEKVTSLGKDWHRPCLRCERCGKTLTPGGHAEHDGQPYCHKPC) form the LIM zinc-binding 2 domain. N6-acetyllysine is present on residues Lys-138 and Lys-144.

As to quaternary structure, interacts with TGFB1I1. As to expression, widespread tissue expression; highest levels in the heart.

This is Cysteine-rich protein 2 (CRIP2) from Homo sapiens (Human).